Consider the following 347-residue polypeptide: MTFMQQLQEAGERFRCINGLLWVVFGLGVLKCTTLSLRFLALIFDLFLLPAVNFDKYGAKSGKYCVITGASDGIGKEFARQMAKRGFNLVLISRTQSKLEALQKELEDQHHVVVKILAIDIAEDKESNYESIKELCAQLPITVLVNNVGQSHSIPVPFLETEEKELRDIITINNTATLLITQIIAPKIVETVKAENKKSGTRGLILTMGSFGGLIPTPLLATYSGSKSFLQSWSNSLAGELSKDAIDVELIISYLVTSSMSKIRRSSLMIPNPQQFVKSTLRSVGRRCGSQERYATMTPYWAHAVYQFVITETFGVYSKIVNSINYSFHKSIRIRALKKAARQVKKE.

A helical membrane pass occupies residues 20-40; that stretch reads LLWVVFGLGVLKCTTLSLRFL. NADP(+) is bound by residues Val-66, Asp-120, Asn-147, Tyr-223, Lys-227, Val-256, and Ser-258. Tyr-223 acts as the Proton donor in catalysis. Lys-227 serves as the catalytic Lowers pKa of active site Tyr.

This sequence belongs to the short-chain dehydrogenases/reductases (SDR) family. As to quaternary structure, interacts with the fatty acid elongation system components ELO3 and TSC13.

Its subcellular location is the endoplasmic reticulum membrane. The enzyme catalyses a very-long-chain (3R)-3-hydroxyacyl-CoA + NADP(+) = a very-long-chain 3-oxoacyl-CoA + NADPH + H(+). It functions in the pathway lipid metabolism; fatty acid biosynthesis. Component of the microsomal membrane bound fatty acid elongation system, which produces the 26-carbon very long-chain fatty acids (VLCFA) from palmitate. Catalyzes the reduction of the 3-ketoacyl-CoA intermediate that is formed in each cycle of fatty acid elongation. VLCFAs serve as precursors for ceramide and sphingolipids. This is Very-long-chain 3-oxoacyl-CoA reductase from Saccharomyces cerevisiae (strain RM11-1a) (Baker's yeast).